A 248-amino-acid polypeptide reads, in one-letter code: Mannose-binding protein C (248 aa).

The N-terminal stretch at 1–20 is a signal peptide; the sequence is MSLFPSLPLLLLSMVAASYS. Residues 42-99 form the Collagen-like domain; the sequence is GINGFPGKDGRDGTKGEKGEPGQGLRGLQGPPGKLGPPGNPGPSGSPGAKGQKGDPGA. Positions 43–112 are disordered; sequence INGFPGKDGR…CDSSLANPER (70 aa). Pro-47 carries the post-translational modification 4-hydroxyproline. A compositionally biased stretch (basic and acidic residues) spans 49-61; it reads KDGRDGTKGEKGE. A 4-hydroxyproline mark is found at Pro-73, Pro-79, Pro-82, and Pro-88. Residues 112–130 adopt a coiled-coil conformation; the sequence is RKTLQTEINRIKKWVTFSL. The region spanning 134 to 245 is the C-type lectin domain; it reads VGKKLFLTNG…CSSSHLVICE (112 aa). 2 cysteine pairs are disulfide-bonded: Cys-155/Cys-244 and Cys-222/Cys-236.

Oligomeric complex of 3 or more homotrimers. Interacts with MASP1 and MASP2. Interacts with MEP1A and MEP1B and may inhibit their catalytic activity. In terms of processing, hydroxylation on proline residues within the sequence motif, GXPG, is most likely to be 4-hydroxy as this fits the requirement for 4-hydroxylation in vertebrates.

It is found in the secreted. Functionally, calcium-dependent lectin involved in innate immune defense. Binds mannose, fucose and N-acetylglucosamine on different microorganisms and activates the lectin complement pathway. Binds to late apoptotic cells, as well as to apoptotic blebs and to necrotic cells, but not to early apoptotic cells, facilitating their uptake by macrophages. The sequence is that of Mannose-binding protein C (MBL2) from Callithrix jacchus (White-tufted-ear marmoset).